Here is a 468-residue protein sequence, read N- to C-terminus: Putative ankyrin repeat protein R873 (468 aa).

ANK repeat units lie at residues 38 to 68 (IKTDIIEYIVDNNLLDVLKYFVVLKNLKHNL), 78 to 107 (SLNENLVKNCEKGNIEIIKYLLDIGADIEG), 109 to 137 (DNCAVLTASHHGHIEVVKYLVCKGANFRA), 138 to 167 (NNDKAVRWASDKGHLDVVKYLVSQGSDIRS), 169 to 197 (NDCSICWASGNGHLEMVKYLVSQGVNIRT), 198 to 227 (NDDWAIRLASENGHLEVVKYLVSQGADIRS), 229 to 257 (DDHAIKWASGNGHLEMVKYLVSQSSNIIA), 258 to 287 (EDNYAVRWASENGHLEVIKYLVSQGSNITS), 289 to 316 (YYTIIAASKNGHIDIVKYLVSQGVNIRD), 317 to 346 (CDSSAVQIASENGHLEVVKYLVSQGIDFRE), 348 to 376 (DDLTFDMALRKGHVEIVKYLVGQGVDFRV), 378 to 406 (DDYPVRMASHCGRLGVVKYFVSQGADVRA), 407 to 436 (EDDYAVRMSAEKGHIEVVKFLVDNGANIRA), and 438 to 466 (NDYAVRLASENGHIKIVEYLVSMGAVLNK).

This Acanthamoeba polyphaga mimivirus (APMV) protein is Putative ankyrin repeat protein R873.